Consider the following 276-residue polypeptide: Borealin (276 aa).

Residues 111–158 are disordered; the sequence is KEAKSSANSEDENMAPLKSTMKKKKASKKAPSTSKKPRTLSISKQGGT.

It belongs to the borealin family. As to quaternary structure, component of the CPC complex.

It is found in the nucleus. The protein localises to the chromosome. It localises to the centromere. The protein resides in the cytoplasm. Its subcellular location is the cytoskeleton. It is found in the spindle. In terms of biological role, component of the chromosomal passenger complex (CPC), a complex that acts as a key regulator of mitosis. The CPC complex has essential functions at the centromere in ensuring correct chromosome alignment and segregation and is required for chromatin-induced microtubule stabilization and spindle assembly. The polypeptide is Borealin (cdca8) (Danio rerio (Zebrafish)).